We begin with the raw amino-acid sequence, 603 residues long: UPF0313 protein MJ1155 (603 aa).

The region spanning 285-557 is the Radical SAM core domain; sequence GIVPVQFSVV…KIQKAICLYR (273 aa). Residues C299, C303, and C306 each contribute to the [4Fe-4S] cluster site.

It belongs to the UPF0313 family. It depends on [4Fe-4S] cluster as a cofactor.

This chain is UPF0313 protein MJ1155, found in Methanocaldococcus jannaschii (strain ATCC 43067 / DSM 2661 / JAL-1 / JCM 10045 / NBRC 100440) (Methanococcus jannaschii).